Consider the following 577-residue polypeptide: Secreted LysM effector Lys4 (577 aa).

The first 19 residues, 1–19, serve as a signal peptide directing secretion; it reads MRALTAAVLFVAGLTPVLA. The LysM 1 domain occupies 38 to 85; it reads AWYTIVKGDGCDTVEKKFKITPEQFFKWNPDVSTDCVKNFWVGNSYCV. Residues 96 to 121 are compositionally biased toward low complexity; it reads TSTTVKSSSTTQKTSSTSSKLSSSSK. The disordered stretch occupies residues 96–135; that stretch reads TSTTVKSSSTTQKTSSTSSKLSSSSKPVNTTTTPYSTRNP. A compositionally biased stretch (polar residues) spans 122-135; the sequence is PVNTTTTPYSTRNP. 4 N-linked (GlcNAc...) asparagine glycosylation sites follow: Asn124, Asn140, Asn216, and Asn235. LysM domains follow at residues 251–298, 328–375, and 408–455; these read NFYQ…YYCV, KWYQ…WYCV, and QYWL…YVCV. The span at 464–485 shows a compositional bias: low complexity; that stretch reads SGSTTTITGPPTKGSNPPTTTT. A disordered region spans residues 464–490; sequence SGSTTTITGPPTKGSNPPTTTTSGGGG. The LysM 5 domain occupies 510-558; sequence FWFRGKDGASLFCADIAKDAGVSLPDFLKWNPGVGSNCESLWADTWYCV.

It belongs to the secreted LysM effector family.

Its function is as follows. Might have a role in sequestration of chitin oligosaccharides (breakdown products of fungal cell walls that are released during invasion and act as triggers of host immunity) to dampen host defense. This chain is Secreted LysM effector Lys4, found in Pochonia chlamydosporia (strain 123) (Metacordyceps chlamydosporia).